The following is a 208-amino-acid chain: Imidazole glycerol phosphate synthase subunit HisH (208 aa).

The Glutamine amidotransferase type-1 domain occupies 2–208 (NVTIVDYNSG…LKIIENFLNL (207 aa)). The active-site Nucleophile is the C85. Catalysis depends on residues H190 and E192.

Heterodimer of HisH and HisF.

It is found in the cytoplasm. The enzyme catalyses 5-[(5-phospho-1-deoxy-D-ribulos-1-ylimino)methylamino]-1-(5-phospho-beta-D-ribosyl)imidazole-4-carboxamide + L-glutamine = D-erythro-1-(imidazol-4-yl)glycerol 3-phosphate + 5-amino-1-(5-phospho-beta-D-ribosyl)imidazole-4-carboxamide + L-glutamate + H(+). It carries out the reaction L-glutamine + H2O = L-glutamate + NH4(+). It participates in amino-acid biosynthesis; L-histidine biosynthesis; L-histidine from 5-phospho-alpha-D-ribose 1-diphosphate: step 5/9. In terms of biological role, IGPS catalyzes the conversion of PRFAR and glutamine to IGP, AICAR and glutamate. The HisH subunit catalyzes the hydrolysis of glutamine to glutamate and ammonia as part of the synthesis of IGP and AICAR. The resulting ammonia molecule is channeled to the active site of HisF. In Pelagibacter ubique (strain HTCC1062), this protein is Imidazole glycerol phosphate synthase subunit HisH.